Consider the following 295-residue polypeptide: Probable porphobilinogen deaminase (295 aa).

Cys-234 is subject to S-(dipyrrolylmethanemethyl)cysteine.

Belongs to the HMBS family. Dipyrromethane serves as cofactor.

It catalyses the reaction 4 porphobilinogen + H2O = hydroxymethylbilane + 4 NH4(+). Its pathway is porphyrin-containing compound metabolism; protoporphyrin-IX biosynthesis; coproporphyrinogen-III from 5-aminolevulinate: step 2/4. In terms of biological role, tetrapolymerization of the monopyrrole PBG into the hydroxymethylbilane pre-uroporphyrinogen in several discrete steps. The protein is Probable porphobilinogen deaminase (hemC) of Thermoplasma acidophilum (strain ATCC 25905 / DSM 1728 / JCM 9062 / NBRC 15155 / AMRC-C165).